A 123-amino-acid chain; its full sequence is Intracellular iron chaperone frataxin (123 aa).

As to quaternary structure, homodimer, upon Fe(2+) binding. Interacts with the SufS/SufU complex. Interacts with CpfC. The cofactor is Fe(2+).

The protein resides in the cytoplasm. In terms of biological role, plays an essential role in iron intracellular trafficking to iron cofactor biogenesis systems including iron-sulfur cluster (Fe-S) or heme assembly. Promotes the biosynthesis of iron-sulfur clusters by delivering Fe to the complex composed of the cysteine desulfurase SufS and the zinc-dependent sulfurtransferase SufU. Also plays a critical role in coproporphyrin-dependent heme b biogenesis and thus provides an essential function for the bacterial global metabolism. This chain is Intracellular iron chaperone frataxin (fra), found in Bacillus subtilis (strain 168).